Consider the following 459-residue polypeptide: Vitronectin (459 aa).

The signal sequence occupies residues 1 to 19; sequence MAPLRPLLMLALLAWVALA. The 44-residue stretch at 20 to 63 folds into the SMB domain; that stretch reads DQESCKGRCTDGFIAERKCQCDELCSYYQSCCTDYVAECKPQVT. 7 disulfide bridges follow: Cys24–Cys28, Cys24–Cys40, Cys28–Cys58, Cys38–Cys40, Cys38–Cys51, Cys44–Cys50, and Cys51–Cys58. Positions 64–66 match the Cell attachment site motif; the sequence is RGD. Sulfotyrosine is present on residues Tyr75, Tyr78, and Tyr80. N-linked (GlcNAc...) asparagine glycosylation is found at Asn87 and Asn146. Hemopexin repeat units lie at residues 135 to 179, 180 to 227, and 228 to 285; these read GKPF…VWGI, KGPI…FKGI, and PDDV…FALM. A phosphoserine mark is found at Ser289 and Ser378. The segment at 338 to 380 is disordered; it reads LKPSQPKMTKSARRSGKRYRSRRGRGRGRGHSRSQKSHRQSRS. The span at 347–378 shows a compositional bias: basic residues; the sequence is KSARRSGKRYRSRRGRGRGRGHSRSQKSHRQS. 2 positions are modified to sulfotyrosine: Tyr398 and Tyr401. A Hemopexin 4 repeat occupies 400-453; it reads DYKMDWLVPATCEPIQSVYFFSGEEYYRVNLRTQRVDTVTPPYPRSIAQYWLGC.

As to quaternary structure, monomer. Interacts with SERPINE1/PAI1 and C1QBP. In terms of processing, sulfated on tyrosine residues. N- and O-glycosylated. Post-translationally, it has been suggested that the active SMB domain may be permitted considerable disulfide bond heterogeneity or variability, thus two alternate disulfide patterns based on 3D structures are described with 1 disulfide bond conserved in both. In terms of tissue distribution, plasma.

Its subcellular location is the secreted. It is found in the extracellular space. Vitronectin is a cell adhesion and spreading factor found in serum and tissues. Vitronectin interact with glycosaminoglycans and proteoglycans. Is recognized by certain members of the integrin family and serves as a cell-to-substrate adhesion molecule. Inhibitor of the membrane-damaging effect of the terminal cytolytic complement pathway. The protein is Vitronectin (VTN) of Sus scrofa (Pig).